The sequence spans 364 residues: Threonine-phosphate decarboxylase (364 aa).

Residues 8-9, N32, and N157 each bind O-phospho-L-threonine; that span reads HG. At K216 the chain carries N6-(pyridoxal phosphate)lysine. O-phospho-L-threonine-binding residues include R323 and R337.

Belongs to the class-II pyridoxal-phosphate-dependent aminotransferase family. As to quaternary structure, homodimer. It depends on pyridoxal 5'-phosphate as a cofactor.

The enzyme catalyses O-phospho-L-threonine + H(+) = (R)-1-aminopropan-2-yl phosphate + CO2. It participates in cofactor biosynthesis; adenosylcobalamin biosynthesis. Functionally, decarboxylates L-threonine-O-3-phosphate to yield (R)-1-amino-2-propanol O-2-phosphate, the precursor for the linkage between the nucleotide loop and the corrin ring in cobalamin. In Salmonella typhimurium (strain LT2 / SGSC1412 / ATCC 700720), this protein is Threonine-phosphate decarboxylase (cobD).